Consider the following 61-residue polypeptide: Temporin-ALj (61 aa).

The first 22 residues, 1-22 (MFTLKKSLLLLFFLATINLSFC), serve as a signal peptide directing secretion. Residues 23–46 (EQERNAEEERRDEPDERNAEVEKR) constitute a propeptide that is removed on maturation. Leucine amide is present on Leu-59.

This sequence belongs to the frog skin active peptide (FSAP) family. Temporin subfamily. Expressed by the skin glands.

It is found in the secreted. Antimicrobial peptide with activity against Gram-positive and Gram-negative bacteria and against fungi. Has been tested against S.aureus (MIC=7.5 ug/mL), B.pumilus (MIC=15.0 ug/mL), B.cereus (MIC=75.0 ug/mL), E.coli (MIC=15.0 ug/mL), B.dysenteriae (MIC=30.0 ug/mL), A.cacoaceticus (MIC=60.0 ug/mL), P.aeruginosa (MIC=7.5 ug/mL) and C.albicans (MIC=5.0 ug/mL). Also shows a weak hemolytic activity. The polypeptide is Temporin-ALj (Amolops loloensis (Lolokou Sucker Frog)).